The sequence spans 435 residues: MANFDLTRINCQFLDRHLTFPLLEFLCGKEIYNQQELLEYILETVNKTNMIDYTMDTRKRLNLSQEMPEELVQRKAEVLATLKQLQNEVAPIMKATDILKNGESMKDSKTFVNALQKDYNFKVEHLESAYKLAKYLYECGNYQESTSYLYFCLIVMSPNDKNYLNVLWGKLAAEILTLNWNTALEDLTRLRDYIDSANFSTIQALQQRTWLIHWSVLVFFNHPKGRDLIIEMFLYKPLYLNAIQTMCPHIMRYLATAVVINRTRRNALKDLIKVIQQESYTYRDPITEFLECLYVNFDFEGARLKLHECQTVILNDFFIVACLNEFVEDARLMIFETFCRIHQCITISMLADKLNMKPNEAECWIVNLIRNARLNAKIDSKLGHVVMGTQPLSPYQQLVEKIDSLSMRSEHLAGLIERKSKQKQNQESADSWKYY.

Residues 219-392 (FFNHPKGRDL…GHVVMGTQPL (174 aa)) form the PCI domain.

The protein belongs to the eIF-3 subunit E family. Component of the eukaryotic translation initiation factor 3 (eIF-3) complex. The eIF-3 complex interacts with pix. Interacts with mxt.

Its subcellular location is the cytoplasm. Its function is as follows. Component of the eukaryotic translation initiation factor 3 (eIF-3) complex, which is involved in protein synthesis of a specialized repertoire of mRNAs and, together with other initiation factors, stimulates binding of mRNA and methionyl-tRNAi to the 40S ribosome. The eIF-3 complex specifically targets and initiates translation of a subset of mRNAs involved in cell proliferation. The sequence is that of Eukaryotic translation initiation factor 3 subunit E (eIF3-S6) from Drosophila erecta (Fruit fly).